Consider the following 689-residue polypeptide: uncharacterized protein (689 aa).

Disordered regions lie at residues 121–206, 286–305, 322–414, and 552–611; these read LALK…VDPS, ASSNQSAAHPDGNNALPMDN, NSYS…SMAH, and AAMP…HLSD. The segment covering 133–158 has biased composition (low complexity); the sequence is SPNNSIPLMANSCLLSADNSSSSTTS. Positions 322–380 are enriched in polar residues; that stretch reads NSYSYDRYTPNQPSYLESKPGNHQPSYTSEQPMYSTASVPQQISNGPTAVNGLPMNSYT. 2 stretches are compositionally biased toward low complexity: residues 381-411 and 560-572; these read PHSNHLHSPSPNSNSGPTDSLSAPNSTSSPS and PSAHDSASAPSPH.

The protein resides in the cytoplasm. This is an uncharacterized protein from Schizosaccharomyces pombe (strain 972 / ATCC 24843) (Fission yeast).